The chain runs to 75 residues: Small ribosomal subunit protein bS16 (75 aa).

Belongs to the bacterial ribosomal protein bS16 family.

The chain is Small ribosomal subunit protein bS16 from Campylobacter hominis (strain ATCC BAA-381 / DSM 21671 / CCUG 45161 / LMG 19568 / NCTC 13146 / CH001A).